A 600-amino-acid polypeptide reads, in one-letter code: Aspartate--tRNA(Asp/Asn) ligase (600 aa).

E187 lines the L-aspartate pocket. An aspartate region spans residues 211–214 (QIFK). The L-aspartate site is built by R233 and H463. 233 to 235 (RDE) contacts ATP. ATP is bound at residue E497. An L-aspartate-binding site is contributed by R504. Residue 549–552 (GIDR) coordinates ATP.

It belongs to the class-II aminoacyl-tRNA synthetase family. Type 1 subfamily. Homodimer.

The protein resides in the cytoplasm. It catalyses the reaction tRNA(Asx) + L-aspartate + ATP = L-aspartyl-tRNA(Asx) + AMP + diphosphate. In terms of biological role, aspartyl-tRNA synthetase with relaxed tRNA specificity since it is able to aspartylate not only its cognate tRNA(Asp) but also tRNA(Asn). Reaction proceeds in two steps: L-aspartate is first activated by ATP to form Asp-AMP and then transferred to the acceptor end of tRNA(Asp/Asn). The chain is Aspartate--tRNA(Asp/Asn) ligase from Wolbachia sp. subsp. Brugia malayi (strain TRS).